A 152-amino-acid polypeptide reads, in one-letter code: MFRGATTLSLDSKGRLAIPAKYRHALSLDCEGKMVCTIDIKQPCLLLYPLPEWQIIEQKLTRLSSMNPAERRLQRLLLGHADDCEMDKNGRLLLSAPLRQHAGLEKKLMLVGQLNKFEVWNEDAWHEQVAQDMDVEREGDFTLNERLEDFSL.

2 consecutive SpoVT-AbrB domains span residues 5-52 (ATTL…PLPE) and 81-124 (ADDC…NEDA).

The protein belongs to the MraZ family. Forms oligomers.

The protein localises to the cytoplasm. The protein resides in the nucleoid. This is Transcriptional regulator MraZ from Idiomarina loihiensis (strain ATCC BAA-735 / DSM 15497 / L2-TR).